The following is a 141-amino-acid chain: Short-chain diamines transporter (141 aa).

The next 4 helical transmembrane spans lie at 16–36 (VILL…PLEV), 39–59 (TLGI…NHFF), 76–96 (ILHA…MVAY), and 103–123 (WQAI…TFIF).

The protein belongs to the proteobacterial antimicrobial compound efflux (PACE) (TC 2.A.117) family.

The protein localises to the cell inner membrane. Mediates the efflux of short-chain diamines when energized by an electrochemical gradient. Involved in resistance to the synthetic biocide chlorhexidine, a widely used antiseptic and disinfectant in both hospital and community settings. Interacts directly with chlorhexidine and mediates its efflux via an energy-dependent mechanism. The chain is Short-chain diamines transporter from Acinetobacter baylyi (strain ATCC 33305 / BD413 / ADP1).